Here is a 479-residue protein sequence, read N- to C-terminus: Aspartyl/glutamyl-tRNA(Asn/Gln) amidotransferase subunit B (479 aa).

This sequence belongs to the GatB/GatE family. GatB subfamily. Heterotrimer of A, B and C subunits.

The catalysed reaction is L-glutamyl-tRNA(Gln) + L-glutamine + ATP + H2O = L-glutaminyl-tRNA(Gln) + L-glutamate + ADP + phosphate + H(+). It carries out the reaction L-aspartyl-tRNA(Asn) + L-glutamine + ATP + H2O = L-asparaginyl-tRNA(Asn) + L-glutamate + ADP + phosphate + 2 H(+). In terms of biological role, allows the formation of correctly charged Asn-tRNA(Asn) or Gln-tRNA(Gln) through the transamidation of misacylated Asp-tRNA(Asn) or Glu-tRNA(Gln) in organisms which lack either or both of asparaginyl-tRNA or glutaminyl-tRNA synthetases. The reaction takes place in the presence of glutamine and ATP through an activated phospho-Asp-tRNA(Asn) or phospho-Glu-tRNA(Gln). The chain is Aspartyl/glutamyl-tRNA(Asn/Gln) amidotransferase subunit B from Geobacter sulfurreducens (strain ATCC 51573 / DSM 12127 / PCA).